The primary structure comprises 533 residues: Glucose-6-phosphate isomerase (533 aa).

The active-site Proton donor is Glu-322. Active-site residues include His-351 and Lys-455.

The protein belongs to the GPI family.

The protein resides in the cytoplasm. The enzyme catalyses alpha-D-glucose 6-phosphate = beta-D-fructose 6-phosphate. It functions in the pathway carbohydrate biosynthesis; gluconeogenesis. Its pathway is carbohydrate degradation; glycolysis; D-glyceraldehyde 3-phosphate and glycerone phosphate from D-glucose: step 2/4. Catalyzes the reversible isomerization of glucose-6-phosphate to fructose-6-phosphate. This chain is Glucose-6-phosphate isomerase, found in Desulfitobacterium hafniense (strain DSM 10664 / DCB-2).